A 345-amino-acid chain; its full sequence is S-adenosylmethionine:tRNA ribosyltransferase-isomerase (345 aa).

The protein belongs to the QueA family. As to quaternary structure, monomer.

The protein resides in the cytoplasm. The enzyme catalyses 7-aminomethyl-7-carbaguanosine(34) in tRNA + S-adenosyl-L-methionine = epoxyqueuosine(34) in tRNA + adenine + L-methionine + 2 H(+). The protein operates within tRNA modification; tRNA-queuosine biosynthesis. Its function is as follows. Transfers and isomerizes the ribose moiety from AdoMet to the 7-aminomethyl group of 7-deazaguanine (preQ1-tRNA) to give epoxyqueuosine (oQ-tRNA). The protein is S-adenosylmethionine:tRNA ribosyltransferase-isomerase of Aromatoleum aromaticum (strain DSM 19018 / LMG 30748 / EbN1) (Azoarcus sp. (strain EbN1)).